The chain runs to 327 residues: UDP-glucose 4-epimerase (327 aa).

Thr119 contacts substrate. Tyr143 acts as the Proton acceptor in catalysis.

This sequence belongs to the NAD(P)-dependent epimerase/dehydratase family. It depends on NAD(+) as a cofactor.

It carries out the reaction UDP-alpha-D-glucose = UDP-alpha-D-galactose. It participates in carbohydrate metabolism; galactose metabolism. The protein operates within glycan metabolism; exopolysaccharide biosynthesis. This Rhizobium leguminosarum bv. trifolii protein is UDP-glucose 4-epimerase (exoB).